Consider the following 325-residue polypeptide: Tetraacyldisaccharide 4'-kinase (325 aa).

T55–T62 is a binding site for ATP.

It belongs to the LpxK family.

It catalyses the reaction a lipid A disaccharide + ATP = a lipid IVA + ADP + H(+). Its pathway is glycolipid biosynthesis; lipid IV(A) biosynthesis; lipid IV(A) from (3R)-3-hydroxytetradecanoyl-[acyl-carrier-protein] and UDP-N-acetyl-alpha-D-glucosamine: step 6/6. Its function is as follows. Transfers the gamma-phosphate of ATP to the 4'-position of a tetraacyldisaccharide 1-phosphate intermediate (termed DS-1-P) to form tetraacyldisaccharide 1,4'-bis-phosphate (lipid IVA). This chain is Tetraacyldisaccharide 4'-kinase, found in Citrobacter koseri (strain ATCC BAA-895 / CDC 4225-83 / SGSC4696).